The primary structure comprises 118 residues: Large ribosomal subunit protein uL24 (118 aa).

Positions 1–24 (MSEQPHKQRTRTKRASLHEKQDQV) are disordered.

Belongs to the universal ribosomal protein uL24 family. In terms of assembly, part of the 50S ribosomal subunit.

In terms of biological role, one of two assembly initiator proteins, it binds directly to the 5'-end of the 23S rRNA, where it nucleates assembly of the 50S subunit. Functionally, located at the polypeptide exit tunnel on the outside of the subunit. The sequence is that of Large ribosomal subunit protein uL24 from Halobacterium salinarum (strain ATCC 700922 / JCM 11081 / NRC-1) (Halobacterium halobium).